The following is a 264-amino-acid chain: 3-methyl-2-oxobutanoate hydroxymethyltransferase (264 aa).

Residues aspartate 45 and aspartate 84 each coordinate Mg(2+). Residues 45–46 (DS), aspartate 84, and lysine 112 each bind 3-methyl-2-oxobutanoate. Glutamate 114 lines the Mg(2+) pocket. Glutamate 181 acts as the Proton acceptor in catalysis.

It belongs to the PanB family. Homodecamer; pentamer of dimers. Mg(2+) is required as a cofactor.

The protein resides in the cytoplasm. The enzyme catalyses 3-methyl-2-oxobutanoate + (6R)-5,10-methylene-5,6,7,8-tetrahydrofolate + H2O = 2-dehydropantoate + (6S)-5,6,7,8-tetrahydrofolate. Its pathway is cofactor biosynthesis; (R)-pantothenate biosynthesis; (R)-pantoate from 3-methyl-2-oxobutanoate: step 1/2. Catalyzes the reversible reaction in which hydroxymethyl group from 5,10-methylenetetrahydrofolate is transferred onto alpha-ketoisovalerate to form ketopantoate. The chain is 3-methyl-2-oxobutanoate hydroxymethyltransferase from Erwinia tasmaniensis (strain DSM 17950 / CFBP 7177 / CIP 109463 / NCPPB 4357 / Et1/99).